The chain runs to 464 residues: Protein FAM90A26 (464 aa).

Disordered regions lie at residues 1-42 (MMAC…DPRL), 70-293 (PPTL…AKRP), 312-390 (PFQI…DGAQ), and 410-442 (AAPSFHSPEKPGAFLAQSPHVSEKSEVPRVRVP). 2 stretches are compositionally biased toward basic and acidic residues: residues 74-83 (GKKEGKENLK) and 97-114 (NKDKGEKEERPRQQDPQR). The span at 178-197 (SALASLSPLRKASLSSSSSL) shows a compositional bias: low complexity.

The protein belongs to the FAM90 family.

In Homo sapiens (Human), this protein is Protein FAM90A26.